Reading from the N-terminus, the 173-residue chain is RNA pyrophosphohydrolase (173 aa).

The Nudix hydrolase domain maps to 6–149 (GFRANVGIII…KRDVYRKVMK (144 aa)). A Nudix box motif is present at residues 38 to 59 (GGVDEGESAEEAMYRELYEEVG).

It belongs to the Nudix hydrolase family. RppH subfamily. It depends on a divalent metal cation as a cofactor.

Accelerates the degradation of transcripts by removing pyrophosphate from the 5'-end of triphosphorylated RNA, leading to a more labile monophosphorylated state that can stimulate subsequent ribonuclease cleavage. This chain is RNA pyrophosphohydrolase, found in Shewanella piezotolerans (strain WP3 / JCM 13877).